Consider the following 2364-residue polypeptide: Cytotoxin-L (2364 aa).

The segment at 1–91 (MNLVNKAQLQ…EVLELKNNSL (91 aa)) is four-helical bundle. One can recognise a GT44 domain in the interval 96 to 468 (KNLHFIWIGG…APDVRSTINL (373 aa)). Residues 96–468 (KNLHFIWIGG…APDVRSTINL (373 aa)) form a glucosyltransferase region region. UDP-alpha-D-glucose-binding positions include 101–103 (IWI), asparagine 139, 265–270 (LAAASD), and 286–288 (DVD). The Mg(2+) site is built by aspartate 288, glutamate 515, and serine 518. Residue 518–520 (SLW) coordinates UDP-alpha-D-glucose. The autoprocessing region stretch occupies residues 544-799 (GEDDNLDFAQ…KSKYLHELST (256 aa)). Glutamate 545 and aspartate 546 together coordinate Zn(2+). Positions 567-774 (LSSMKTRNKE…EESIIKDISS (208 aa)) constitute a Peptidase C80 domain. 1D-myo-inositol hexakisphosphate is bound by residues tyrosine 577, lysine 600, and lysine 647. A Zn(2+)-binding site is contributed by histidine 653. The active-site For protease activity is the histidine 653. The active-site Nucleophile; for protease activity is the cysteine 698. Position 757 (histidine 757) interacts with Zn(2+). 1D-myo-inositol hexakisphosphate contacts are provided by lysine 764, lysine 775, and lysine 792. The translocation region stretch occupies residues 800–1500 (LLQEIRNNAN…ESIIRNIYMP (701 aa)). Interaction with host SEMA6A and SEMA6B stretches follow at residues 1433–1438 (CMKLIE), 1466–1471 (DNETKY), 1484–1495 (FTAEFSNESIIR), 1504–1511 (NLFIYSSK), and 1596–1601 (YNNLDP). 20 Cell wall-binding repeats span residues 1813 to 1832 (EFGL…FGNM), 1833 to 1852 (VSGL…PKNN), 1854 to 1873 (ITGF…TKSG), 1876 to 1895 (SIGE…QGIL), 1926 to 1945 (FIGK…NYRA), 1946 to 1965 (AVEW…KTGE), 1967 to 1986 (LKGL…NGIM), 1987 to 2006 (QTGF…DGVM), 2007 to 2026 (QVGY…NGER), 2057 to 2076 (YNGI…SNTA), 2077 to 2097 (VVGW…NRAE), 2099 to 2118 (CIGL…NGIR), 2119 to 2138 (QLGF…SGKI), 2139 to 2158 (ELGY…SGLV), 2209 to 2224 (ETGW…YFDP), 2227 to 2249 (KKAY…NGIM), 2250 to 2269 (RTGL…DGKM), 2270 to 2289 (QFGY…DGKM), 2320 to 2339 (YTGW…EYIA), and 2340 to 2359 (ATGS…DTAE). The receptor-binding (CROPS) region stretch occupies residues 1835 to 2364 (GLIYINDSLY…PDTAELVVSE (530 aa)).

It belongs to the clostridial glucosylating toxin (LCGT) family. In terms of assembly, homomultimer; forms an inactive homomultimer at pH 8, which dissociates at pH 4, leading to cytotoxicity. Interacts with host SEMA6A; interaction promotes toxin entry into host cell. Interacts with host SEMA6B; interaction promotes toxin entry into host cell. Requires Zn(2+) as cofactor. The cofactor is Mn(2+). Mg(2+) serves as cofactor. In terms of processing, undergoes autocatalytic cleavage to release the N-terminal part (Glucosyltransferase TcsL), which constitutes the active part of the toxin, in the host cytosol. 1D-myo-inositol hexakisphosphate-binding (InsP6) activates the peptidase C80 domain and promotes autoprocessing.

It is found in the secreted. The protein localises to the host endosome membrane. It localises to the host cytoplasm. Its subcellular location is the host cytosol. The protein resides in the host cell membrane. The enzyme catalyses L-threonyl-[protein] + UDP-alpha-D-glucose = 3-O-(alpha-D-glucosyl)-L-threonyl-[protein] + UDP + H(+). Its activity is regulated as follows. Protease activity is activated upon binding to 1D-myo-inositol hexakisphosphate (InsP6), which induces conformational reorganization. In terms of biological role, precursor of a cytotoxin that targets the vascular endothelium, inducing an anti-inflammatory effect and resulting in lethal toxic shock syndrome. TcsL constitutes the main toxin that mediates the pathology of P.sordellii infection, an anaerobic Gram-positive bacterium found in soil and in the gastrointestinal and vaginal tracts of animals and humans; although the majority of carriers are asymptomatic, pathogenic P.sordellii infections arise rapidly and are highly lethal. This form constitutes the precursor of the toxin: it enters into host cells and mediates autoprocessing to release the active toxin (Glucosyltransferase TcsL) into the host cytosol. Targets vascular endothelium by binding to the semaphorin proteins SEMA6A and SEMA6B, and enters host cells via clathrin-mediated endocytosis. Once entered into host cells, acidification in the endosome promotes the membrane insertion of the translocation region and formation of a pore, leading to translocation of the GT44 and peptidase C80 domains across the endosomal membrane. This activates the peptidase C80 domain and autocatalytic processing, releasing the N-terminal part (Glucosyltransferase TcsL), which constitutes the active part of the toxin, in the cytosol. Functionally, active form of the toxin, which is released into the host cytosol following autoprocessing and inactivates small GTPases. Acts by mediating monoglucosylation of small GTPases of the Ras (H-Ras/HRAS, K-Ras/KRAS, N-Ras/NRAS and Ral/RALA) family in host cells at the conserved threonine residue located in the switch I region ('Thr-37/35'), using UDP-alpha-D-glucose as the sugar donor. Also able to catalyze monoglucosylation of some members of the Rho family (Rac1 and Rap2A), but with less efficiency than with Ras proteins. Monoglucosylation of host small GTPases completely prevents the recognition of the downstream effector, blocking the GTPases in their inactive form and leading to apoptosis. Induces an anti-inflammatory effect, mainly by inactivating Ras proteins which results in blockage of the cell cycle and killing of immune cells. The absence or moderate local inflammatory response allows C.sordellii spreading in deep tissues, production of toxin which is released in the general circulation and causes a toxic shock syndrome. The protein is Cytotoxin-L of Paraclostridium sordellii (Clostridium sordellii).